Consider the following 267-residue polypeptide: L-aspartate dehydrogenase 2 (267 aa).

NAD(+) is bound by residues Ala123 and Asn189. Residue His219 is part of the active site.

The protein belongs to the L-aspartate dehydrogenase family.

The catalysed reaction is L-aspartate + NADP(+) + H2O = oxaloacetate + NH4(+) + NADPH + H(+). It carries out the reaction L-aspartate + NAD(+) + H2O = oxaloacetate + NH4(+) + NADH + H(+). It participates in cofactor biosynthesis; NAD(+) biosynthesis; iminoaspartate from L-aspartate (dehydrogenase route): step 1/1. Specifically catalyzes the NAD or NADP-dependent dehydrogenation of L-aspartate to iminoaspartate. This Bordetella bronchiseptica (strain ATCC BAA-588 / NCTC 13252 / RB50) (Alcaligenes bronchisepticus) protein is L-aspartate dehydrogenase 2.